The following is a 138-amino-acid chain: Transcription antitermination protein NusB (138 aa).

This sequence belongs to the NusB family.

Its function is as follows. Involved in transcription antitermination. Required for transcription of ribosomal RNA (rRNA) genes. Binds specifically to the boxA antiterminator sequence of the ribosomal RNA (rrn) operons. This is Transcription antitermination protein NusB from Leptospira interrogans serogroup Icterohaemorrhagiae serovar copenhageni (strain Fiocruz L1-130).